A 107-amino-acid chain; its full sequence is Nucleoid-associated protein AZOSEA06390 (107 aa).

This sequence belongs to the YbaB/EbfC family. As to quaternary structure, homodimer.

The protein localises to the cytoplasm. It localises to the nucleoid. In terms of biological role, binds to DNA and alters its conformation. May be involved in regulation of gene expression, nucleoid organization and DNA protection. The polypeptide is Nucleoid-associated protein AZOSEA06390 (Aromatoleum aromaticum (strain DSM 19018 / LMG 30748 / EbN1) (Azoarcus sp. (strain EbN1))).